We begin with the raw amino-acid sequence, 498 residues long: Glycerol kinase (498 aa).

Position 11 (Thr-11) interacts with ADP. Positions 11, 12, and 13 each coordinate ATP. Position 11 (Thr-11) interacts with sn-glycerol 3-phosphate. Arg-15 lines the ADP pocket. Sn-glycerol 3-phosphate is bound by residues Arg-81, Glu-82, Tyr-133, and Asp-242. Arg-81, Glu-82, Tyr-133, Asp-242, and Gln-243 together coordinate glycerol. Thr-264 and Gly-307 together coordinate ADP. ATP contacts are provided by Thr-264, Gly-307, Gln-311, and Gly-408. ADP contacts are provided by Gly-408 and Asn-412.

It belongs to the FGGY kinase family.

It catalyses the reaction glycerol + ATP = sn-glycerol 3-phosphate + ADP + H(+). It participates in polyol metabolism; glycerol degradation via glycerol kinase pathway; sn-glycerol 3-phosphate from glycerol: step 1/1. With respect to regulation, inhibited by fructose 1,6-bisphosphate (FBP). Key enzyme in the regulation of glycerol uptake and metabolism. Catalyzes the phosphorylation of glycerol to yield sn-glycerol 3-phosphate. This is Glycerol kinase from Ralstonia nicotianae (strain ATCC BAA-1114 / GMI1000) (Ralstonia solanacearum).